A 410-amino-acid chain; its full sequence is Cysteine desulfurase IscS (410 aa).

Residues 80-81 (AT), Asn160, Gln188, and 208-210 (SGH) each bind pyridoxal 5'-phosphate. Lys211 is modified (N6-(pyridoxal phosphate)lysine). A pyridoxal 5'-phosphate-binding site is contributed by Thr248. Cys334 serves as the catalytic Cysteine persulfide intermediate. Cys334 lines the [2Fe-2S] cluster pocket.

The protein belongs to the class-V pyridoxal-phosphate-dependent aminotransferase family. NifS/IscS subfamily. Homodimer. Forms a heterotetramer with IscU, interacts with other sulfur acceptors. It depends on pyridoxal 5'-phosphate as a cofactor.

The protein localises to the cytoplasm. The catalysed reaction is (sulfur carrier)-H + L-cysteine = (sulfur carrier)-SH + L-alanine. The protein operates within cofactor biosynthesis; iron-sulfur cluster biosynthesis. Its function is as follows. Master enzyme that delivers sulfur to a number of partners involved in Fe-S cluster assembly, tRNA modification or cofactor biosynthesis. Catalyzes the removal of elemental sulfur atoms from cysteine to produce alanine. Functions as a sulfur delivery protein for Fe-S cluster synthesis onto IscU, an Fe-S scaffold assembly protein, as well as other S acceptor proteins. The protein is Cysteine desulfurase IscS of Rickettsia typhi (strain ATCC VR-144 / Wilmington).